The primary structure comprises 156 residues: ATP synthase subunit b (156 aa).

Residues 11 to 31 (LIAFALFVWFCMKFVWPPIIN) form a helical membrane-spanning segment.

It belongs to the ATPase B chain family. F-type ATPases have 2 components, F(1) - the catalytic core - and F(0) - the membrane proton channel. F(1) has five subunits: alpha(3), beta(3), gamma(1), delta(1), epsilon(1). F(0) has three main subunits: a(1), b(2) and c(10-14). The alpha and beta chains form an alternating ring which encloses part of the gamma chain. F(1) is attached to F(0) by a central stalk formed by the gamma and epsilon chains, while a peripheral stalk is formed by the delta and b chains.

It localises to the cell inner membrane. Functionally, f(1)F(0) ATP synthase produces ATP from ADP in the presence of a proton or sodium gradient. F-type ATPases consist of two structural domains, F(1) containing the extramembraneous catalytic core and F(0) containing the membrane proton channel, linked together by a central stalk and a peripheral stalk. During catalysis, ATP synthesis in the catalytic domain of F(1) is coupled via a rotary mechanism of the central stalk subunits to proton translocation. In terms of biological role, component of the F(0) channel, it forms part of the peripheral stalk, linking F(1) to F(0). In Haemophilus influenzae (strain PittEE), this protein is ATP synthase subunit b.